The chain runs to 232 residues: Aliphatic sulfonates import ATP-binding protein SsuB 2 (232 aa).

The 216-residue stretch at 1–216 (MDIRVDRKAF…PRDRRDPLLA (216 aa)) folds into the ABC transporter domain. 33–40 (GPSGCGKS) is an ATP binding site.

It belongs to the ABC transporter superfamily. Aliphatic sulfonates importer (TC 3.A.1.17.2) family. The complex is composed of two ATP-binding proteins (SsuB), two transmembrane proteins (SsuC) and a solute-binding protein (SsuA).

It localises to the cell inner membrane. It catalyses the reaction ATP + H2O + aliphatic sulfonate-[sulfonate-binding protein]Side 1 = ADP + phosphate + aliphatic sulfonateSide 2 + [sulfonate-binding protein]Side 1.. Part of the ABC transporter complex SsuABC involved in aliphatic sulfonates import. Responsible for energy coupling to the transport system. The protein is Aliphatic sulfonates import ATP-binding protein SsuB 2 of Pseudomonas syringae pv. tomato (strain ATCC BAA-871 / DC3000).